Consider the following 185-residue polypeptide: Pyruvate/ketoisovalerate oxidoreductases common subunit gamma (185 aa).

In terms of assembly, heterotetramer of one alpha, one beta, one delta and one gamma chain.

The catalysed reaction is 2 oxidized [2Fe-2S]-[ferredoxin] + pyruvate + CoA = 2 reduced [2Fe-2S]-[ferredoxin] + acetyl-CoA + CO2 + H(+). It carries out the reaction 3-methyl-2-oxobutanoate + 2 oxidized [2Fe-2S]-[ferredoxin] + CoA = 2-methylpropanoyl-CoA + 2 reduced [2Fe-2S]-[ferredoxin] + CO2 + H(+). The polypeptide is Pyruvate/ketoisovalerate oxidoreductases common subunit gamma (porG) (Thermococcus kodakarensis (strain ATCC BAA-918 / JCM 12380 / KOD1) (Pyrococcus kodakaraensis (strain KOD1))).